We begin with the raw amino-acid sequence, 206 residues long: Small ribosomal subunit protein uS4 (206 aa).

Residues 96–156 enclose the S4 RNA-binding domain; sequence GRLDNVVYRM…EKSKKQARIK (61 aa).

It belongs to the universal ribosomal protein uS4 family. As to quaternary structure, part of the 30S ribosomal subunit. Contacts protein S5. The interaction surface between S4 and S5 is involved in control of translational fidelity.

Its function is as follows. One of the primary rRNA binding proteins, it binds directly to 16S rRNA where it nucleates assembly of the body of the 30S subunit. With S5 and S12 plays an important role in translational accuracy. This is Small ribosomal subunit protein uS4 from Histophilus somni (strain 2336) (Haemophilus somnus).